Consider the following 277-residue polypeptide: Insertion element IS407 uncharacterized 31.7 kDa protein (277 aa).

One can recognise an Integrase catalytic domain in the interval 103–264 (LPGAPNEVWS…APSEFAAKHR (162 aa)).

This chain is Insertion element IS407 uncharacterized 31.7 kDa protein, found in Burkholderia multivorans (strain ATCC 17616 / 249).